A 410-amino-acid chain; its full sequence is Killer cell immunoglobulin-like receptor 3DL3 (410 aa).

An N-terminal signal peptide occupies residues 1 to 25 (MSLMVVSMACVGFFLLEGPWPHVGG). Over 26–322 (QDKPFLSAWP…VSVTGNSRHL (297 aa)) the chain is Extracellular. Ig-like C2-type domains are found at residues 42-97 (GQHV…RCCS), 137-197 (GETV…RCFG), and 237-295 (GENV…RCFG). 2 disulfide bridges follow: Cys-49/Cys-95 and Cys-144/Cys-195. 3 N-linked (GlcNAc...) asparagine glycosylation sites follow: Asn-179, Asn-239, and Asn-273. Cys-244 and Cys-293 are disulfide-bonded. Residues 323–343 (HVLIGTSVVIIPFAILLFFLL) traverse the membrane as a helical segment. At 344–410 (HRWCANKKNA…PKTPPTDTSV (67 aa)) the chain is on the cytoplasmic side.

Belongs to the immunoglobulin superfamily.

The protein localises to the cell membrane. Its function is as follows. Receptor on natural killer cells. May inhibit the activity of NK cells thus preventing cell lysis. The polypeptide is Killer cell immunoglobulin-like receptor 3DL3 (KIR3DL3) (Homo sapiens (Human)).